The primary structure comprises 406 residues: Argininosuccinate synthase (406 aa).

ATP is bound by residues 11 to 19 (AYSGGLDTS) and alanine 38. L-citrulline-binding residues include tyrosine 91 and serine 96. Residue glycine 121 participates in ATP binding. L-aspartate contacts are provided by threonine 123, asparagine 127, and aspartate 128. L-citrulline is bound at residue asparagine 127. Residues arginine 131, serine 181, serine 190, glutamate 266, and tyrosine 278 each contribute to the L-citrulline site.

Belongs to the argininosuccinate synthase family. Type 1 subfamily. In terms of assembly, homotetramer.

The protein resides in the cytoplasm. It carries out the reaction L-citrulline + L-aspartate + ATP = 2-(N(omega)-L-arginino)succinate + AMP + diphosphate + H(+). It participates in amino-acid biosynthesis; L-arginine biosynthesis; L-arginine from L-ornithine and carbamoyl phosphate: step 2/3. This is Argininosuccinate synthase from Campylobacter hominis (strain ATCC BAA-381 / DSM 21671 / CCUG 45161 / LMG 19568 / NCTC 13146 / CH001A).